Reading from the N-terminus, the 236-residue chain is Terpene cyclase andB (236 aa).

7 helical membrane passes run 13-33, 45-65, 70-90, 106-126, 135-155, 166-186, and 200-220; these read TVVNLLGSASGIGWILNYILM, MSMLPLCCNIAWEFVYGILCP, VVRPVILSWLVLNCLVVYAAI, HLPLLFTVGIAACTGFHIALI, FLWSARSCQVLLSIGGLFQLL, VLWLSRFLGSICGVLKMTLMW, and LTAYCIALWIISDVLYGVVFY.

This sequence belongs to the paxB family.

Its subcellular location is the membrane. It functions in the pathway secondary metabolite biosynthesis; terpenoid biosynthesis. Terpene cyclase; part of the gene cluster that mediates the biosynthesis of anditomin, a fungal meroterpenoid. The first step of the pathway is the synthesis of 3,5-dimethylorsellinic acid (DMOA) by the polyketide synthase andM. DMOA is then converted to the phthalide compound 5,7-dihydroxy-4,6-dimethylphthalide (DHDMP) by the cytochrome P450 monooxygenase andK, which is further prenylated by the prenyltransferase andD to yield farnesyl-DHDMP. Further epoxidation by the FAD-dependent monooxygenase andE leads to epoxyfarnesyl-DHDMP. The next step involves the terpene cyclase andB that converts epoxyfarnesyl-DHDMP into preandiloid A through opening of the epoxide ring followed by the cyclization of the farnesyl moiety. Preandiloid A is in turn oxidized at the C-3 hydroxyl group to yield preandiloid B by the dehydrogenase andC. The dioxygenase andA is solely responsible for the dehydrogenation of preandiloid B leading to the enone preandiloid C, as well as for the intriguing structural rearrangement to generate the bicyclo[2.2.2]octane core, transforming preandiloid C into andiconin. FAD-binding monooxygenase andJ then produces andilesin D which is reduced by dehydrogenase andI to yield andilesin A. Action of acetyltransferase andG followed by a spontaneous acetate elimination leads then to andilesin B, which is in turn substrate of the short chain dehydrogenase andH to yield andilesin C. Finally, the dioxygenase andF catalyzes the transformation of andilesin C to anditomin. This chain is Terpene cyclase andB, found in Emericella variicolor (Aspergillus stellatus).